The sequence spans 379 residues: Cyclic di-GMP phosphodiesterase PdeB (379 aa).

An HD-GYP domain is found at 114–310 (FYKKQKKIFI…PLDFIVELND (197 aa)).

Mn(2+) is required as a cofactor.

It catalyses the reaction 3',3'-c-di-GMP + 2 H2O = 2 GMP + 2 H(+). Phosphodiesterase (PDE) that catalyzes the hydrolysis of cyclic diguanylate (c-di-GMP) to GMP. In Borreliella burgdorferi (strain ATCC 35210 / DSM 4680 / CIP 102532 / B31) (Borrelia burgdorferi), this protein is Cyclic di-GMP phosphodiesterase PdeB.